Consider the following 162-residue polypeptide: Auracyanin-A (162 aa).

An N-terminal signal peptide occupies residues 1–22; it reads MKITLRMMVLAVLTAMAMVLAA. Cys23 carries N-palmitoyl cysteine lipidation. Cys23 carries S-diacylglycerol cysteine lipidation. Residues 42–162 form the Plastocyanin-like domain; sequence VTIEIGSKGE…PLMQGKLVVN (121 aa). Cu cation-binding residues include His81, Cys146, His151, and Met155.

In terms of assembly, monomer. Cu cation is required as a cofactor.

It localises to the cell membrane. Functionally, probably a soluble electron acceptor for the integral membrane protein electron transfer alternative complex III (ACIII). The sequence is that of Auracyanin-A from Chloroflexus aurantiacus (strain ATCC 29366 / DSM 635 / J-10-fl).